The primary structure comprises 134 residues: UPF0102 protein Dvul_2148 (134 aa).

The protein belongs to the UPF0102 family.

This Nitratidesulfovibrio vulgaris (strain DP4) (Desulfovibrio vulgaris) protein is UPF0102 protein Dvul_2148.